The following is a 375-amino-acid chain: Dual-specificity RNA methyltransferase RlmN (375 aa).

The Proton acceptor role is filled by glutamate 94. Residues 100 to 339 (EDDRATLCVS…VTVRKTRGDD (240 aa)) form the Radical SAM core domain. A disulfide bond links cysteine 107 and cysteine 344. Cysteine 114, cysteine 118, and cysteine 121 together coordinate [4Fe-4S] cluster. Residues 168-169 (GE), serine 200, 222-224 (SLH), and asparagine 301 contribute to the S-adenosyl-L-methionine site. The S-methylcysteine intermediate role is filled by cysteine 344.

It belongs to the radical SAM superfamily. RlmN family. It depends on [4Fe-4S] cluster as a cofactor.

The protein localises to the cytoplasm. It catalyses the reaction adenosine(2503) in 23S rRNA + 2 reduced [2Fe-2S]-[ferredoxin] + 2 S-adenosyl-L-methionine = 2-methyladenosine(2503) in 23S rRNA + 5'-deoxyadenosine + L-methionine + 2 oxidized [2Fe-2S]-[ferredoxin] + S-adenosyl-L-homocysteine. The enzyme catalyses adenosine(37) in tRNA + 2 reduced [2Fe-2S]-[ferredoxin] + 2 S-adenosyl-L-methionine = 2-methyladenosine(37) in tRNA + 5'-deoxyadenosine + L-methionine + 2 oxidized [2Fe-2S]-[ferredoxin] + S-adenosyl-L-homocysteine. In terms of biological role, specifically methylates position 2 of adenine 2503 in 23S rRNA and position 2 of adenine 37 in tRNAs. m2A2503 modification seems to play a crucial role in the proofreading step occurring at the peptidyl transferase center and thus would serve to optimize ribosomal fidelity. This chain is Dual-specificity RNA methyltransferase RlmN, found in Vibrio campbellii (strain ATCC BAA-1116).